A 208-amino-acid polypeptide reads, in one-letter code: Uracil phosphoribosyltransferase (208 aa).

Residues arginine 78, arginine 103, and 130–138 (DPMLATANS) each bind 5-phospho-alpha-D-ribose 1-diphosphate. Uracil-binding positions include isoleucine 193 and 198 to 200 (GDA). Residue aspartate 199 participates in 5-phospho-alpha-D-ribose 1-diphosphate binding.

The protein belongs to the UPRTase family. Mg(2+) is required as a cofactor.

The catalysed reaction is UMP + diphosphate = 5-phospho-alpha-D-ribose 1-diphosphate + uracil. Its pathway is pyrimidine metabolism; UMP biosynthesis via salvage pathway; UMP from uracil: step 1/1. Its activity is regulated as follows. Allosterically activated by GTP. Catalyzes the conversion of uracil and 5-phospho-alpha-D-ribose 1-diphosphate (PRPP) to UMP and diphosphate. The polypeptide is Uracil phosphoribosyltransferase (Brucella abortus biovar 1 (strain 9-941)).